The chain runs to 446 residues: N-succinylarginine dihydrolase 2 (446 aa).

Residues 20–29, N111, and 138–139 each bind substrate; these read VGLSPGNLAS and HR. E175 is an active-site residue. R212 contributes to the substrate binding site. Residue H246 is part of the active site. Residues D248 and N361 each coordinate substrate. C367 serves as the catalytic Nucleophile.

The protein belongs to the succinylarginine dihydrolase family. In terms of assembly, homodimer.

It carries out the reaction N(2)-succinyl-L-arginine + 2 H2O + 2 H(+) = N(2)-succinyl-L-ornithine + 2 NH4(+) + CO2. Its pathway is amino-acid degradation; L-arginine degradation via AST pathway; L-glutamate and succinate from L-arginine: step 2/5. In terms of biological role, catalyzes the hydrolysis of N(2)-succinylarginine into N(2)-succinylornithine, ammonia and CO(2). The protein is N-succinylarginine dihydrolase 2 of Caulobacter vibrioides (strain ATCC 19089 / CIP 103742 / CB 15) (Caulobacter crescentus).